The following is a 126-amino-acid chain: Small ribosomal subunit protein bS16 (126 aa).

The tract at residues 87 to 126 is disordered; that stretch reads ARSNPEKALPGKRALERVAEKKQKAEDAAAAAAAEASAAE. Basic and acidic residues predominate over residues 99-113; sequence RALERVAEKKQKAED. A compositionally biased stretch (low complexity) spans 114-126; it reads AAAAAAAEASAAE.

Belongs to the bacterial ribosomal protein bS16 family.

This is Small ribosomal subunit protein bS16 from Agrobacterium fabrum (strain C58 / ATCC 33970) (Agrobacterium tumefaciens (strain C58)).